The primary structure comprises 348 residues: Chaperone protein DnaJ (348 aa).

Residues aspartate 3–valine 65 form the J domain. The CR-type zinc finger occupies glycine 109–proline 191. Residues cysteine 122, cysteine 125, cysteine 139, cysteine 142, cysteine 165, cysteine 168, cysteine 179, and cysteine 182 each coordinate Zn(2+). CXXCXGXG motif repeat units follow at residues cysteine 122–arginine 129, cysteine 139–glycine 146, cysteine 165–glycine 172, and cysteine 179–glycine 186.

The protein belongs to the DnaJ family. In terms of assembly, homodimer. It depends on Zn(2+) as a cofactor.

It localises to the cytoplasm. Functionally, participates actively in the response to hyperosmotic and heat shock by preventing the aggregation of stress-denatured proteins and by disaggregating proteins, also in an autonomous, DnaK-independent fashion. Unfolded proteins bind initially to DnaJ; upon interaction with the DnaJ-bound protein, DnaK hydrolyzes its bound ATP, resulting in the formation of a stable complex. GrpE releases ADP from DnaK; ATP binding to DnaK triggers the release of the substrate protein, thus completing the reaction cycle. Several rounds of ATP-dependent interactions between DnaJ, DnaK and GrpE are required for fully efficient folding. Also involved, together with DnaK and GrpE, in the DNA replication of plasmids through activation of initiation proteins. This chain is Chaperone protein DnaJ, found in Tropheryma whipplei (strain Twist) (Whipple's bacillus).